The following is a 437-amino-acid chain: Adenosylhomocysteinase (437 aa).

3 residues coordinate substrate: Thr-58, Asp-133, and Glu-158. 159–161 (TTT) contacts NAD(+). The substrate site is built by Lys-188 and Asp-192. Residues Asn-193, 224–229 (GDVGKG), Glu-245, 301–303 (VGH), and Asn-348 contribute to the NAD(+) site.

The protein belongs to the adenosylhomocysteinase family. In terms of assembly, homotetramer. It depends on NAD(+) as a cofactor.

The enzyme catalyses S-adenosyl-L-homocysteine + H2O = L-homocysteine + adenosine. The protein operates within amino-acid biosynthesis; L-homocysteine biosynthesis; L-homocysteine from S-adenosyl-L-homocysteine: step 1/1. Its function is as follows. Adenosylhomocysteine is a competitive inhibitor of S-adenosyl-L-methionine-dependent methyl transferase reactions; therefore adenosylhomocysteinase may play a key role in the control of methylations via regulation of the intracellular concentration of adenosylhomocysteine. This chain is Adenosylhomocysteinase (ahcy-1), found in Caenorhabditis elegans.